We begin with the raw amino-acid sequence, 486 residues long: MMNNNESEAENQRLLDELMNQTKVLQETLDFSLVTPTPHHNDDYKIHGSAYPGGETPAQQHEKLSYINTHNSNDNNNLMGSQARSNSQTPTASTIYEEAESQSSYLDDMFRTSQGGRPVTQNSISSIGQGPLRSSYSMAYDSPVDRAMNTPLQQQEGLKAELPHDFLFQHGTDDTMYNLTDDLSSSLSSSINSDMMTPNTYSSSFSYNPQSLGPASVSSTYSPKVRSPSSSFRAGSFLSSSFRHGSINTPRTRHTSISSNMTENIGPGSVPKILGGLTSDEKLRRKREFHNAVERRRRELIKQKIKELGQLVPPSLLNYDDLGKQIKPNKGIILDRTVEYLQYLAEILEIQARKKKALLAKIKELEEKKSSVAALSPFTNNHHASSGQNNSENSEERIIDIRSVPNALMNEQNSKAELHNWEPPLYDSVGNHNHAGTMESHPHTNIHEELKEFLSGDLIEAEDNAKLMFGDDNSNPADYLLEFGSG.

The short motif at 27-35 (ETLDFSLVT) is the 9aaTAD 1 element. Polar residues-rich tracts occupy residues 75–94 (NNNL…TAST) and 101–130 (SQSS…IGQG). The tract at residues 75 to 130 (NNNLMGSQARSNSQTPTASTIYEEAESQSSYLDDMFRTSQGGRPVTQNSISSIGQG) is disordered. 3 positions are modified to phosphoserine: S81, S123, and S142. Position 150 is a phosphothreonine (T150). Positions 189–197 (SSINSDMMT) match the 9aaTAD 2 motif. A phosphoserine mark is found at S227, S236, and S241. Residues 243–274 (RHGSINTPRTRHTSISSNMTENIGPGSVPKIL) form a disordered region. Over residues 246 to 263 (SINTPRTRHTSISSNMTE) the composition is skewed to polar residues. A Phosphoserine modification is found at S269. Residues 285–344 (RKREFHNAVERRRRELIKQKIKELGQLVPPSLLNYDDLGKQIKPNKGIILDRTVEYLQYL) enclose the bHLH domain. A disordered region spans residues 374-395 (ALSPFTNNHHASSGQNNSENSE).

As to quaternary structure, binds DNA as a heterodimer with RTG1.

The protein localises to the nucleus. In terms of biological role, transcription factor that regulates CIT2 gene expression. Binds to two identical sites oriented as inverted repeats 28 bp apart in a regulatory upstream activation sequence element (UASR) in the CIT2 promoter. The core binding site is 5'-GGTCAC-3'. The polypeptide is Retrograde regulation protein 3 (RTG3) (Saccharomyces cerevisiae (strain ATCC 204508 / S288c) (Baker's yeast)).